A 92-amino-acid chain; its full sequence is Small ribosomal subunit protein uS19 (92 aa).

Belongs to the universal ribosomal protein uS19 family.

Functionally, protein S19 forms a complex with S13 that binds strongly to the 16S ribosomal RNA. In Sinorhizobium medicae (strain WSM419) (Ensifer medicae), this protein is Small ribosomal subunit protein uS19.